The chain runs to 407 residues: Protein trichome birefringence-like 12 (407 aa).

The helical; Signal-anchor for type II membrane protein transmembrane segment at 21-41 (SLLPRILLLSLLLLLFYSLIL) threads the bilayer. Positions 130–132 (GDS) match the GDS motif motif. Residues 379–393 (DCMHWCLPGVPDTWV) carry the DCXHWCLPGXXDXWN motif motif.

This sequence belongs to the PC-esterase family. TBL subfamily.

It localises to the membrane. In terms of biological role, may act as a bridging protein that binds pectin and other cell wall polysaccharides. Probably involved in maintaining esterification of pectins. May be involved in the specific O-acetylation of cell wall polymers. The sequence is that of Protein trichome birefringence-like 12 (TBL12) from Arabidopsis thaliana (Mouse-ear cress).